A 628-amino-acid chain; its full sequence is Hemocyanin II (628 aa).

At Thr1 the chain carries Blocked amino end (Thr); partial. Residues His173, His177, His204, His324, His328, and His364 each coordinate Cu cation. N-linked (GlcNAc...) asparagine glycosylation is present at Asn449. 2 disulfides stabilise this stretch: Cys534-Cys576 and Cys536-Cys583.

This sequence belongs to the tyrosinase family. Hemocyanin subfamily. Hexamer or a multiple thereof. In terms of tissue distribution, hemolymph.

It localises to the secreted. The protein resides in the extracellular space. Functionally, hemocyanins are copper-containing oxygen carriers occurring freely dissolved in the hemolymph of many mollusks and arthropods. The polypeptide is Hemocyanin II (Limulus polyphemus (Atlantic horseshoe crab)).